The sequence spans 897 residues: Translation initiation factor IF-2 (897 aa).

The region spanning 402–570 (NRAPIVTIMG…SILVQSEILE (169 aa)) is the tr-type G domain. The tract at residues 411–418 (GHVDHGKT) is G1. Position 411–418 (411–418 (GHVDHGKT)) interacts with GTP. Residues 436–440 (GITQN) are G2. A G3 region spans residues 458-461 (DTPG). Residues 458 to 462 (DTPGH) and 512 to 515 (NKID) each bind GTP. The tract at residues 512 to 515 (NKID) is G4. The tract at residues 548-550 (SAV) is G5.

Belongs to the TRAFAC class translation factor GTPase superfamily. Classic translation factor GTPase family. IF-2 subfamily.

Its subcellular location is the cytoplasm. Its function is as follows. One of the essential components for the initiation of protein synthesis. Protects formylmethionyl-tRNA from spontaneous hydrolysis and promotes its binding to the 30S ribosomal subunits. Also involved in the hydrolysis of GTP during the formation of the 70S ribosomal complex. This chain is Translation initiation factor IF-2, found in Blochmanniella floridana.